Consider the following 682-residue polypeptide: MELFPIIPAGGILALLVALYMTSSVLKEDTGPKEMQTIAAAIREGAMAFLNRQYRTIAGLALIVAVLLALLTRQYHTAVAFITGAFASALSGYIGMYVAVNANLRVAAGARNSLNKALTVAFRGGAVTGLAVTALSLLGVTSLFYAFGGATNPTRAPLDIVGFGFGASFVALFAQLSGGIYTKAADVGADLVGKVEAGIPEDDPRNPAVIADLVGDNVGDCAGRGADLFESTAAENIGAMILGIALVPFFGVKGIVFPLVARAAGIIASIIGMFFVRAEENQDPMAALNRGYIVTSILAIIFLYPISRYMLSGPGVNFIYFYGAGIIGIVLSFIFVLITQYYTSYDYRPVKEIARASITGPATNIISGVAVGFESTALPVVFISLAILGAYWLGLKSGLPGGGLYGTAVATMGMLSTAAYILAMDTYGPITDNAGGIVEMSGAPEEVRRRTDRLDASGNTTKALTKGYAIGSAALATFLLFSAYIDEVKIALNIKGNFPVDIGKPEVFVGAFIAAMMVLLFSSTAIRAVGNAAQYVILEVRRQFKEIPGIMEGTAKPEYGACVDIVTRGALKEMVLPGLIVVITPIIVGLVLKAEAAAAFLMVGTITGVIVALFLNNGGGAWDNAKKYIELGNFGGKGSEAHKAGVVGDTVGDPFKDTAGPSLHVLVKLISTITLVLAGLFI.

5 consecutive transmembrane segments (helical) span residues 1-21 (MELF…ALYM), 56-76 (TIAG…RQYH), 78-98 (AVAF…GMYV), 130-150 (LAVT…FGGA), and 160-180 (IVGF…SGGI). Residue K183 participates in substrate binding. Mg(2+) is bound by residues D186, D190, and D216. A run of 7 helical transmembrane segments spans residues 237 to 257 (IGAM…GIVF), 258 to 278 (PLVA…FVRA), 291 to 311 (GYIV…RYML), 318 to 338 (FIYF…FVLI), 353 to 373 (IARA…AVGF), 375 to 395 (STAL…WLGL), and 404 to 424 (LYGT…ILAM). D432 is a binding site for Mg(2+). The next 4 membrane-spanning stretches (helical) occupy residues 468–488 (YAIG…IDEV), 506–526 (EVFV…STAI), 574–594 (MVLP…VLKA), and 595–615 (EAAA…ALFL). Residues D623, D649, and D653 each contribute to the Ca(2+) site. K656 is a binding site for substrate. Residues 662 to 682 (SLHVLVKLISTITLVLAGLFI) traverse the membrane as a helical segment.

The protein belongs to the H(+)-translocating pyrophosphatase (TC 3.A.10) family. K(+)-insensitive subfamily. In terms of assembly, homodimer. Mg(2+) serves as cofactor.

It is found in the cell membrane. It catalyses the reaction diphosphate + H2O + H(+)(in) = 2 phosphate + 2 H(+)(out). Its function is as follows. Proton pump that utilizes the energy of pyrophosphate hydrolysis as the driving force for proton movement across the membrane. Generates a proton motive force. In Moorella thermoacetica (strain ATCC 39073 / JCM 9320), this protein is K(+)-insensitive pyrophosphate-energized proton pump 2.